The primary structure comprises 117 residues: Swarming motility protein SwrAA (117 aa).

Its subcellular location is the cytoplasm. Functionally, required for swarm cell differentiation. Plays a crucial role in regulating the degree of cell flagellation. The chain is Swarming motility protein SwrAA (swrAA) from Bacillus subtilis (strain 168).